The primary structure comprises 443 residues: ATP-dependent protease ATPase subunit HslU (443 aa).

ATP is bound by residues V18, 60–65, D256, E321, and R393; that span reads GVGKTE.

It belongs to the ClpX chaperone family. HslU subfamily. In terms of assembly, a double ring-shaped homohexamer of HslV is capped on each side by a ring-shaped HslU homohexamer. The assembly of the HslU/HslV complex is dependent on binding of ATP.

The protein localises to the cytoplasm. ATPase subunit of a proteasome-like degradation complex; this subunit has chaperone activity. The binding of ATP and its subsequent hydrolysis by HslU are essential for unfolding of protein substrates subsequently hydrolyzed by HslV. HslU recognizes the N-terminal part of its protein substrates and unfolds these before they are guided to HslV for hydrolysis. In Azoarcus sp. (strain BH72), this protein is ATP-dependent protease ATPase subunit HslU.